A 475-amino-acid polypeptide reads, in one-letter code: E3 ubiquitin-protein ligase TRIM21 (475 aa).

The RING-type zinc finger occupies 16-55 (CPICLDPFVEPVSIECGHSFCQECISQVGKGGGSVCPVCR). Zn(2+) is bound by residues cysteine 92, histidine 95, cysteine 114, and histidine 120. Residues 92–123 (CAVHGERLHLFCEKDGKALCWVCAQSRKHRDH) form a B box-type zinc finger. The stretch at 128 to 238 (LEEAAQEYQE…ISELDRRCHS (111 aa)) forms a coiled coil. Residue serine 266 is modified to Phosphoserine. The B30.2/SPRY domain maps to 268 to 465 (ELRSVCHVPG…NTAPLTLCPL (198 aa)).

The protein belongs to the TRIM/RBCC family. As to quaternary structure, homotrimer. Interacts (via C-terminus) with IRF8 (via C-terminus). Component of a SCF(SKP2)-like complex containing CUL1, SKP1, TRIM21 and SKP2. Interacts with CALR, CUL1, FBXW11, HSPA5, IKBKB, IRF3, SKP1 and VCP. Interacts with SKP2; the interaction with SKP2 does not depend on an intact F-box domain. Interacts (via N-terminus and C-terminus) with DCP2 (via N-terminus and C-terminus). Interacts with ULK1, BECN1 and with ATG8 family members, including GABARAP, GABARAPL1, GABARAPL2 and MAP1LC3C/LC3C. Interacts with TRIM21 and SQSTM1/sequestosome 1. Interacts with IRF3. Interacts (via the SPRY domain) with NMI (via coiled-coil domain); the interaction promotes 'Lys-63'-linked ubiquitination of NMI. Interacts with IFI35 and NMI; the interaction facilitates NMI-IFI35 complex formation. In terms of assembly, (Microbial infection) Interacts (via B30.2/SPRY domain) with severe fever with thrombocytopenia syndrome virus (SFTSV) NSs; this interaction activates NFE2L2-mediated transcriptional activation of antioxidant genes. In terms of processing, autoubiquitinated; does not lead to its proteasomal degradation. Deubiquitinated by USP4; leading to its stabilization. In terms of tissue distribution, isoform 1 and isoform 2 are expressed in fetal and adult heart and fetal lung.

The protein resides in the cytoplasm. It localises to the cytoplasmic vesicle. It is found in the autophagosome. Its subcellular location is the nucleus. The protein localises to the P-body. The protein resides in the stress granule. It carries out the reaction S-ubiquitinyl-[E2 ubiquitin-conjugating enzyme]-L-cysteine + [acceptor protein]-L-lysine = [E2 ubiquitin-conjugating enzyme]-L-cysteine + N(6)-ubiquitinyl-[acceptor protein]-L-lysine.. The protein operates within protein modification; protein ubiquitination. In terms of biological role, E3 ubiquitin-protein ligase whose activity is dependent on E2 enzymes, UBE2D1, UBE2D2, UBE2E1 and UBE2E2. Forms a ubiquitin ligase complex in cooperation with the E2 UBE2D2 that is used not only for the ubiquitination of USP4 and IKBKB but also for its self-ubiquitination. Component of cullin-RING-based SCF (SKP1-CUL1-F-box protein) E3 ubiquitin-protein ligase complexes such as SCF(SKP2)-like complexes. A TRIM21-containing SCF(SKP2)-like complex is shown to mediate ubiquitination of CDKN1B ('Thr-187' phosphorylated-form), thereby promoting its degradation by the proteasome. Monoubiquitinates IKBKB that will negatively regulates Tax-induced NF-kappa-B signaling. Negatively regulates IFN-beta production post-pathogen recognition by catalyzing polyubiquitin-mediated degradation of IRF3. Mediates the ubiquitin-mediated proteasomal degradation of IgG1 heavy chain, which is linked to the VCP-mediated ER-associated degradation (ERAD) pathway. Promotes IRF8 ubiquitination, which enhanced the ability of IRF8 to stimulate cytokine genes transcription in macrophages. Plays a role in the regulation of the cell cycle progression. Enhances the decapping activity of DCP2. Exists as a ribonucleoprotein particle present in all mammalian cells studied and composed of a single polypeptide and one of four small RNA molecules. At least two isoforms are present in nucleated and red blood cells, and tissue specific differences in RO/SSA proteins have been identified. The common feature of these proteins is their ability to bind HY RNAs.2. Involved in the regulation of innate immunity and the inflammatory response in response to IFNG/IFN-gamma. Organizes autophagic machinery by serving as a platform for the assembly of ULK1, Beclin 1/BECN1 and ATG8 family members and recognizes specific autophagy targets, thus coordinating target recognition with assembly of the autophagic apparatus and initiation of autophagy. Also regulates autophagy through FIP200/RB1CC1 ubiquitination and subsequent decreased protein stability. Represses the innate antiviral response by facilitating the formation of the NMI-IFI35 complex through 'Lys-63'-linked ubiquitination of NMI. During viral infection, promotes cell pyroptosis by mediating 'Lys-6'-linked ubiquitination of ISG12a/IFI27, facilitating its translocation into the mitochondria and subsequent CASP3 activation. When up-regulated through the IFN/JAK/STAT signaling pathway, promotes 'Lys-27'-linked ubiquitination of MAVS, leading to the recruitment of TBK1 and up-regulation of innate immunity. Mediates 'Lys-63'-linked polyubiquitination of G3BP1 in response to heat shock, leading to stress granule disassembly. The sequence is that of E3 ubiquitin-protein ligase TRIM21 from Homo sapiens (Human).